Consider the following 317-residue polypeptide: Transaldolase 2 (317 aa).

Residue K132 is the Schiff-base intermediate with substrate of the active site.

Belongs to the transaldolase family. Type 1 subfamily. In terms of assembly, homodimer.

It localises to the cytoplasm. The catalysed reaction is D-sedoheptulose 7-phosphate + D-glyceraldehyde 3-phosphate = D-erythrose 4-phosphate + beta-D-fructose 6-phosphate. Its pathway is carbohydrate degradation; pentose phosphate pathway; D-glyceraldehyde 3-phosphate and beta-D-fructose 6-phosphate from D-ribose 5-phosphate and D-xylulose 5-phosphate (non-oxidative stage): step 2/3. Functionally, transaldolase is important for the balance of metabolites in the pentose-phosphate pathway. The chain is Transaldolase 2 from Pectobacterium atrosepticum (strain SCRI 1043 / ATCC BAA-672) (Erwinia carotovora subsp. atroseptica).